The following is a 465-amino-acid chain: 6-phospho-beta-glucosidase (465 aa).

E173 functions as the Proton donor in the catalytic mechanism. E362 (nucleophile) is an active-site residue.

This sequence belongs to the glycosyl hydrolase 1 family.

The enzyme catalyses 6-phospho-beta-D-glucosyl-(1-&gt;4)-D-glucose + H2O = D-glucose 6-phosphate + D-glucose. The protein operates within carbohydrate metabolism; beta-glucoside metabolism. The protein is 6-phospho-beta-glucosidase (arbB) of Dickeya chrysanthemi (Pectobacterium chrysanthemi).